Consider the following 78-residue polypeptide: Probable [Fe-S]-dependent transcriptional repressor (78 aa).

Iron-sulfur cluster contacts are provided by C56, C61, C64, and C70.

Belongs to the FeoC family.

May function as a transcriptional regulator that controls feoABC expression. This is Probable [Fe-S]-dependent transcriptional repressor from Escherichia coli O17:K52:H18 (strain UMN026 / ExPEC).